Reading from the N-terminus, the 143-residue chain is Ribonuclease P protein component 2 (143 aa).

It belongs to the eukaryotic/archaeal RNase P protein component 2 family. In terms of assembly, consists of a catalytic RNA component and at least 4-5 protein subunits.

Its subcellular location is the cytoplasm. The catalysed reaction is Endonucleolytic cleavage of RNA, removing 5'-extranucleotides from tRNA precursor.. Its function is as follows. Part of ribonuclease P, a protein complex that generates mature tRNA molecules by cleaving their 5'-ends. This is Ribonuclease P protein component 2 from Saccharolobus islandicus (strain Y.N.15.51 / Yellowstone #2) (Sulfolobus islandicus).